Here is a 425-residue protein sequence, read N- to C-terminus: Protein CLP1 homolog (425 aa).

ATP is bound by residues Glu-18, Lys-59, and 121-126 (DVGKST).

This sequence belongs to the Clp1 family. Clp1 subfamily.

It is found in the nucleus. Its function is as follows. Required for endonucleolytic cleavage during polyadenylation-dependent pre-mRNA 3'-end formation. In Drosophila persimilis (Fruit fly), this protein is Protein CLP1 homolog (cbc).